The following is a 101-amino-acid chain: Large ribosomal subunit protein uL24 (101 aa).

It belongs to the universal ribosomal protein uL24 family. Part of the 50S ribosomal subunit.

Functionally, one of two assembly initiator proteins, it binds directly to the 5'-end of the 23S rRNA, where it nucleates assembly of the 50S subunit. Its function is as follows. One of the proteins that surrounds the polypeptide exit tunnel on the outside of the subunit. This Borreliella afzelii (strain PKo) (Borrelia afzelii) protein is Large ribosomal subunit protein uL24.